The sequence spans 260 residues: Cytochrome c oxidase subunit 2 (260 aa).

The Mitochondrial intermembrane segment spans residues 1–41 (MIVLKWLFFTISPCDAAEPWQLGFQDAATPIMQGIIDLHHD). Residues 42 to 62 (IFFFLILILVFVLWILVRALW) form a helical membrane-spanning segment. Topologically, residues 63 to 86 (HFHYKKNAIPQRIVHGTTIEILWT) are mitochondrial matrix. A helical membrane pass occupies residues 87–107 (IFPSIILMFIAIPSFALLYSM). The Mitochondrial intermembrane portion of the chain corresponds to 108–260 (DEVVVDPAIT…NQLIPQTGEA (153 aa)). Cu cation contacts are provided by H187, C222, E224, C226, H230, and M233. E224 contacts Mg(2+).

It belongs to the cytochrome c oxidase subunit 2 family. In terms of assembly, component of the cytochrome c oxidase (complex IV, CIV), a multisubunit enzyme composed of a catalytic core of 3 subunits and several supernumerary subunits. The complex exists as a monomer or a dimer and forms supercomplexes (SCs) in the inner mitochondrial membrane with ubiquinol-cytochrome c oxidoreductase (cytochrome b-c1 complex, complex III, CIII). Requires Cu cation as cofactor.

The protein localises to the mitochondrion inner membrane. The catalysed reaction is 4 Fe(II)-[cytochrome c] + O2 + 8 H(+)(in) = 4 Fe(III)-[cytochrome c] + 2 H2O + 4 H(+)(out). Component of the cytochrome c oxidase, the last enzyme in the mitochondrial electron transport chain which drives oxidative phosphorylation. The respiratory chain contains 3 multisubunit complexes succinate dehydrogenase (complex II, CII), ubiquinol-cytochrome c oxidoreductase (cytochrome b-c1 complex, complex III, CIII) and cytochrome c oxidase (complex IV, CIV), that cooperate to transfer electrons derived from NADH and succinate to molecular oxygen, creating an electrochemical gradient over the inner membrane that drives transmembrane transport and the ATP synthase. Cytochrome c oxidase is the component of the respiratory chain that catalyzes the reduction of oxygen to water. Electrons originating from reduced cytochrome c in the intermembrane space (IMS) are transferred via the dinuclear copper A center (CU(A)) of subunit 2 and heme A of subunit 1 to the active site in subunit 1, a binuclear center (BNC) formed by heme A3 and copper B (CU(B)). The BNC reduces molecular oxygen to 2 water molecules using 4 electrons from cytochrome c in the IMS and 4 protons from the mitochondrial matrix. This is Cytochrome c oxidase subunit 2 (COX2) from Arabidopsis thaliana (Mouse-ear cress).